We begin with the raw amino-acid sequence, 352 residues long: C-C chemokine receptor type 5 (352 aa).

Residues 1-30 are Extracellular-facing; it reads MDYQVSSPTYDIDYYTSEPCQKINVKQIAA. At tyrosine 3 the chain carries Sulfotyrosine. Residues serine 6 and serine 7 are each glycosylated (O-linked (GalNAc...) serine). Sulfotyrosine occurs at positions 10, 14, and 15. 2 disulfides stabilise this stretch: cysteine 20/cysteine 269 and cysteine 101/cysteine 178. Residues 31–58 traverse the membrane as a helical segment; that stretch reads RLLPPLYSLVFIFGFVGNILVVLILINC. Residues 59–68 lie on the Cytoplasmic side of the membrane; it reads KRLKSMTDIY. Residues 69–89 traverse the membrane as a helical segment; it reads LLNLAISDLLFLLTIPFWAHY. Residues 90–102 lie on the Extracellular side of the membrane; the sequence is AAAQWDFGNTMCQ. Residues 103–124 form a helical membrane-spanning segment; the sequence is LLTGLYLIGFFSGIFFIILLTI. Topologically, residues 125–141 are cytoplasmic; sequence DRYLAIVHAVFALKART. The chain crosses the membrane as a helical span at residues 142-166; it reads VTFGLVTSVITWVVAVFASLPGIIF. At 167-198 the chain is on the extracellular side; sequence TRSQREGLHYTCSSHFPSSQYQFWKNFQTLKI. A helical membrane pass occupies residues 199–218; the sequence is VILGLVLPLLVMVICYSGIL. Residues 219–235 lie on the Cytoplasmic side of the membrane; sequence KTLLRCRNEKKRHRAVR. The chain crosses the membrane as a helical span at residues 236-260; that stretch reads LIFTIMIVYFLFWAPYNIVLLLNTF. Residues 261–277 are Extracellular-facing; the sequence is QEFFGLNNCSSSNRLDQ. The chain crosses the membrane as a helical span at residues 278–301; the sequence is AMQVTETLGMTHCCINPIIYAFVG. Over 302–352 the chain is Cytoplasmic; that stretch reads EKFRNYLLVFFQKHLAKRFCKCCSIFQQEAPERASSVYTRSTGEQETTVGL. Residues cysteine 321, cysteine 323, and cysteine 324 are each lipidated (S-palmitoyl cysteine). Phosphoserine; by BARK1 occurs at positions 336, 337, and 342.

The protein belongs to the G-protein coupled receptor 1 family. Interacts with PRAF2. Efficient ligand binding to CCL3/MIP-1alpha and CCL4/MIP-1beta requires sulfation, O-glycosylation and sialic acid modifications. Glycosylation on Ser-6 is required for efficient binding of CCL4. Interacts with GRK2. Interacts with ARRB1 and ARRB2. Interacts with CNIH4. Interacts with S100A4; this interaction stimulates T-lymphocyte chemotaxis. Post-translationally, sulfated on at least 2 of the N-terminal tyrosines. Sulfation is required for efficient binding of the chemokines, CCL3 and CCL4. In terms of processing, palmitoylation in the C-terminal is important for cell surface expression. Phosphorylation on serine residues in the C-terminal is stimulated by binding CC chemokines especially by APO-RANTES. Post-translationally, O-glycosylated, but not N-glycosylated. Ser-6 appears to be the major site even if Ser-7 may be also O-glycosylated. Also sialylated glycans present which contribute to chemokine binding. Thr-16 and Ser-17 may also be glycosylated and, if so, with small moieties such as a T-antigen.

The protein localises to the cell membrane. Its function is as follows. Receptor for a number of inflammatory CC-chemokines including CCL3/MIP-1-alpha, CCL4/MIP-1-beta and RANTES and subsequently transduces a signal by increasing the intracellular calcium ion level. May play a role in the control of granulocytic lineage proliferation or differentiation. Participates in T-lymphocyte migration to the infection site by acting as a chemotactic receptor. The protein is C-C chemokine receptor type 5 (CCR5) of Allochrocebus lhoesti (L'Hoest's monkey).